The chain runs to 480 residues: Aspartyl/glutamyl-tRNA(Asn/Gln) amidotransferase subunit B (480 aa).

This sequence belongs to the GatB/GatE family. GatB subfamily. As to quaternary structure, heterotrimer of A, B and C subunits.

The catalysed reaction is L-glutamyl-tRNA(Gln) + L-glutamine + ATP + H2O = L-glutaminyl-tRNA(Gln) + L-glutamate + ADP + phosphate + H(+). The enzyme catalyses L-aspartyl-tRNA(Asn) + L-glutamine + ATP + H2O = L-asparaginyl-tRNA(Asn) + L-glutamate + ADP + phosphate + 2 H(+). Its function is as follows. Allows the formation of correctly charged Asn-tRNA(Asn) or Gln-tRNA(Gln) through the transamidation of misacylated Asp-tRNA(Asn) or Glu-tRNA(Gln) in organisms which lack either or both of asparaginyl-tRNA or glutaminyl-tRNA synthetases. The reaction takes place in the presence of glutamine and ATP through an activated phospho-Asp-tRNA(Asn) or phospho-Glu-tRNA(Gln). This Saccharophagus degradans (strain 2-40 / ATCC 43961 / DSM 17024) protein is Aspartyl/glutamyl-tRNA(Asn/Gln) amidotransferase subunit B.